We begin with the raw amino-acid sequence, 76 residues long: Dermaseptin-SP2 (76 aa).

The signal sequence occupies residues 1–22 (MAFLKKSLFLVLFLGLVSLSIC). Residues 23–45 (EEEKRENEDEEEQEDEEQSEEKR) constitute a propeptide that is removed on maturation. The tract at residues 24–44 (EEKRENEDEEEQEDEEQSEEK) is disordered. Residues 30–41 (EDEEEQEDEEQS) show a composition bias toward acidic residues. At Gln73 the chain carries Glutamine amide. Residues 74–76 (GEQ) constitute a propeptide that is removed on maturation.

As to expression, expressed by the skin glands.

It is found in the secreted. The protein localises to the target cell membrane. Antimicrobial peptide with activity against Gram-positive and Gram-negative bacteria and fungi. Has been tested against E.coli (MIC=2.68-8 uM), S.aureus (ATCC 25923, MIC=2.68-8 uM), S.aureus (ATCC oxacillin resistant, MIC=2.68 uM), K.pneumoniae (MIC=10.71 uM) and C.albicans (MIC=10.71-32 uM). Probably acts by disturbing membrane functions with its alpha-helical amphipathic structure. May penetrate bacterial membranes, but stay at the mammalian membrane surface. Shows a very weak hemolytic activity. This chain is Dermaseptin-SP2, found in Agalychnis spurrelli (Gliding leaf frog).